The primary structure comprises 896 residues: Probable DNA-directed RNA polymerase (896 aa).

Residues Asp-546, Lys-617, and Asp-798 contribute to the active site.

This sequence belongs to the phage and mitochondrial RNA polymerase family.

The protein resides in the mitochondrion. The enzyme catalyses RNA(n) + a ribonucleoside 5'-triphosphate = RNA(n+1) + diphosphate. Its function is as follows. DNA-dependent RNA polymerase catalyzes the transcription of DNA into RNA using the four ribonucleoside triphosphates as substrates. The polypeptide is Probable DNA-directed RNA polymerase (Neurospora crassa).